The following is a 238-amino-acid chain: Protein G1-like8 (238 aa).

Disordered stretches follow at residues 1-33 and 147-238; these read MEGG…RYES and KARG…ATRV. A compositionally biased stretch (low complexity) spans 10 to 27; that stretch reads GQAQPVAQAPPAMQPMQQ. Residues 30–157 form the ALOG domain; the sequence is RYESQKRRDW…ARGIPYEKKK (128 aa). The Nuclear localization signal motif lies at 155-159; it reads KKKRK. Over residues 165-176 the composition is skewed to pro residues; the sequence is QPPPPPPPPPQH. Low complexity-rich tracts occupy residues 177–213 and 222–238; these read QPGA…ATSQ and TTTT…ATRV.

The protein belongs to the plant homeotic and developmental regulators ALOG protein family.

It is found in the nucleus. Its function is as follows. Probable transcription regulator that acts as a developmental regulator by promoting cell growth in response to light. This is Protein G1-like8 (G1L8) from Oryza sativa subsp. japonica (Rice).